The following is a 338-amino-acid chain: Replication factor C small subunit (338 aa).

An ATP-binding site is contributed by 53-60; that stretch reads GPPGVGKT.

The protein belongs to the activator 1 small subunits family. RfcS subfamily. Heteromultimer composed of small subunits (RfcS) and large subunits (RfcL).

Functionally, part of the RFC clamp loader complex which loads the PCNA sliding clamp onto DNA. This Methanosarcina acetivorans (strain ATCC 35395 / DSM 2834 / JCM 12185 / C2A) protein is Replication factor C small subunit.